The chain runs to 527 residues: Rhesus-like glycoprotein A (527 aa).

Over 1–18 (MTHNDDDHKWVTTKRKEP) the chain is Cytoplasmic. The chain crosses the membrane as a helical span at residues 19-39 (IFFTVILFIFQIFMIICFAAL). At 40–70 (TGYDTNKNYTGSENPDEFKGGEVQERVNNFY) the chain is on the extracellular side. N47 carries N-linked (GlcNAc...) asparagine glycosylation. A helical transmembrane segment spans residues 71-91 (GYFRDINIMIFFGFGFLMTFL). The Cytoplasmic segment spans residues 92-99 (RRYGYSAL). Residues 100–120 (GYTFIISALVSQWSVLLNGFF) form a helical membrane-spanning segment. The Extracellular segment spans residues 121 to 141 (EAWSHSNKHGEFPSTWEFSMD). Residues 142-162 (SLLQGFFCSGSVMISYGAILG) form a helical membrane-spanning segment. Topologically, residues 163–166 (RVTP) are cytoplasmic. The chain crosses the membrane as a helical span at residues 167–187 (LHMLIMGIIEPIFFFLNVFIG). Over 188 to 195 (EMNLEAID) the chain is Extracellular. A helical membrane pass occupies residues 196 to 216 (VGGGMYIHLFGSVFGLTVAWF). Residues 217 to 236 (LTDRKSKECTDNAPSYSGDN) are Cytoplasmic-facing. A helical transmembrane segment spans residues 237-257 (FAMAGTLFLWMMWPSFNAAIA). The Extracellular segment spans residues 258 to 263 (PLGEPQ). The chain crosses the membrane as a helical span at residues 264–284 (FRAIANTFLSLTGSTVATFIV). Over 285–299 (SRLFSHLGNKLDMVH) the chain is Cytoplasmic. Residues 300–319 (VQNSSLAGGVVQGCIAHMNI) traverse the membrane as a helical segment. The Extracellular portion of the chain corresponds to 320 to 321 (NP). Residues 322–342 (GGAIAMGFIAGTISVCGYLFI) form a helical membrane-spanning segment. The Cytoplasmic portion of the chain corresponds to 343–357 (TPKVQRKLHIQDTCG). Residues 358–378 (ILNLHCIPGFLGSIAAIFAAI) form a helical membrane-spanning segment. The Extracellular segment spans residues 379–406 (KGLNNPNMYSKVEFEQIFRAGDSQASAN). A helical transmembrane segment spans residues 407–427 (LIATMVSIGLGIVGGLLVGVI). Over 428 to 527 (LLQLKKIKGL…EEDEFKQEPI (100 aa)) the chain is Cytoplasmic. Positions 471 to 527 (SEDTAGGDDEEEGVGKEHGAVEMGKHNRIVQPKQDNKYHKQLPSDDEEEDEFKQEPI) are disordered. Positions 483-495 (GVGKEHGAVEMGK) are enriched in basic and acidic residues. The span at 514–527 (SDDEEEDEFKQEPI) shows a compositional bias: acidic residues.

It belongs to the ammonium transporter (TC 2.A.49) family. Rh subfamily. In terms of assembly, interacts with ap1g1.

It is found in the contractile vacuole. Its subcellular location is the membrane. In terms of biological role, may be a carbon dioxide/bicarbonate transporter. The protein is Rhesus-like glycoprotein A (rhgA) of Dictyostelium discoideum (Social amoeba).